A 378-amino-acid chain; its full sequence is 7-methylxanthine methyltransferase 1 (378 aa).

Tyrosine 18, cysteine 61, asparagine 66, aspartate 100, leucine 101, serine 139, phenylalanine 140, and cysteine 156 together coordinate S-adenosyl-L-homocysteine. Residues tyrosine 157, histidine 160, and tryptophan 161 each coordinate theobromine. Positions 178, 260, 262, and 263 each coordinate Mg(2+). Theobromine is bound at residue tyrosine 362.

This sequence belongs to the methyltransferase superfamily. Type-7 methyltransferase family. It depends on Mg(2+) as a cofactor. As to expression, mainly expressed, at low levels, in leaves and fruits (grains). Also present, at lower levels, in roots, stamens and pistils.

It localises to the cytoplasm. It catalyses the reaction 7-methylxanthine + S-adenosyl-L-methionine = theobromine + S-adenosyl-L-homocysteine + H(+). Its pathway is alkaloid biosynthesis. Its function is as follows. Involved in the biosynthesis of caffeine. Catalyzes the conversion of 7-methylxanthine (7mX) to theobromine and of paraxanthine to caffeine. The polypeptide is 7-methylxanthine methyltransferase 1 (Coffea canephora (Robusta coffee)).